A 157-amino-acid chain; its full sequence is ATP synthase subunit b', chloroplastic (157 aa).

The chain crosses the membrane as a helical span at residues 26 to 43 (LMASQFLLIMLILDITFY).

This sequence belongs to the ATPase B chain family. As to quaternary structure, F-type ATPases have 2 components, F(1) - the catalytic core - and F(0) - the membrane proton channel. F(1) has five subunits: alpha(3), beta(3), gamma(1), delta(1), epsilon(1). F(0) has four main subunits: a(1), b(1), b'(1) and c(10-14). The alpha and beta chains form an alternating ring which encloses part of the gamma chain. F(1) is attached to F(0) by a central stalk formed by the gamma and epsilon chains, while a peripheral stalk is formed by the delta, b and b' chains.

The protein resides in the plastid. Its subcellular location is the chloroplast thylakoid membrane. F(1)F(0) ATP synthase produces ATP from ADP in the presence of a proton or sodium gradient. F-type ATPases consist of two structural domains, F(1) containing the extramembraneous catalytic core and F(0) containing the membrane proton channel, linked together by a central stalk and a peripheral stalk. During catalysis, ATP synthesis in the catalytic domain of F(1) is coupled via a rotary mechanism of the central stalk subunits to proton translocation. In terms of biological role, component of the F(0) channel, it forms part of the peripheral stalk, linking F(1) to F(0). The b'-subunit is a diverged and duplicated form of b found in plants and photosynthetic bacteria. This Cyanidium caldarium (Red alga) protein is ATP synthase subunit b', chloroplastic.